The chain runs to 511 residues: ESX-1 secretion system protein EccD1 (511 aa).

The residue at position 2 (S2) is an N-acetylserine. Topologically, residues 2–143 are cytoplasmic; sequence SAPAVAAGPT…PEFDRTALNR (142 aa). Residues 144-164 form a helical membrane-spanning segment; the sequence is FVGAAIPLLTAPVIGMAMRAW. Residues 165-170 lie on the Periplasmic side of the membrane; it reads WETGRS. A helical transmembrane segment spans residues 171-191; it reads LWWPLAIGILGIAVLVGSFVA. At 192–202 the chain is on the cytoplasmic side; that stretch reads NRFYQSGHLAE. Residues 203–223 traverse the membrane as a helical segment; it reads CLLVTTYLLIATAAALAVPLP. Topologically, residues 224–227 are periplasmic; that stretch reads RGVN. The helical transmembrane segment at 228–248 threads the bilayer; it reads SLGAPQVAGAATAVLFLTLMT. Residues 249 to 257 lie on the Cytoplasmic side of the membrane; that stretch reads RGGPRKRHE. Residues 258–278 traverse the membrane as a helical segment; sequence LASFAVITAIAVIAAAAAFGY. Residues 279–285 lie on the Periplasmic side of the membrane; sequence GYQDWVP. The helical transmembrane segment at 286–306 threads the bilayer; the sequence is AGGIAFGLFIVTNAAKLTVAV. The Cytoplasmic portion of the chain corresponds to 307-367; it reads ARIALPPIPV…TERSKLAKQL (61 aa). The next 2 helical transmembrane spans lie at 368–388 and 389–409; these read LIGY…AVVV and RGHF…VCGF. Residues 410 to 420 are Cytoplasmic-facing; sequence RSRLYAERWCA. A helical transmembrane segment spans residues 421–441; that stretch reads WALLAATVAIPTGLTAKLIIW. At 442–444 the chain is on the periplasmic side; sequence YPH. Residues 445-465 traverse the membrane as a helical segment; it reads YAWLLLSVYLTVALVALVVVG. Residues 466 to 482 are Cytoplasmic-facing; it reads SMAHVRRVSPVVKRTLE. Residues 483–503 form a helical membrane-spanning segment; the sequence is LIDGAMIAAIIPMLLWITGVY. At 504–511 the chain is on the periplasmic side; sequence DTVRNIRF.

This sequence belongs to the EccD/Snm4 family. Possibly a homodimer. Part of the ESX-1 / type VII secretion system (T7SS), which is composed of cytosolic and membrane components. The ESX-1 membrane complex is composed of EccB1, EccCa1, EccCb1, EccD1 and EccE1.

The protein localises to the cell inner membrane. Its function is as follows. Part of the ESX-1 specialized secretion system, which delivers several virulence factors to host cells during infection, including the key virulence factors EsxA (ESAT-6) and EsxB (CFP-10). The chain is ESX-1 secretion system protein EccD1 from Mycobacterium tuberculosis (strain ATCC 25618 / H37Rv).